The sequence spans 330 residues: Ketol-acid reductoisomerase (NADP(+)) (330 aa).

The 181-residue stretch at 1–181 (MNVYYEKDAD…GGTKAGVIET (181 aa)) folds into the KARI N-terminal Rossmann domain. NADP(+) is bound by residues 24–27 (YGSQ), R47, S50, S52, and 82–85 (DQNQ). Residue H107 is part of the active site. G133 lines the NADP(+) pocket. The region spanning 182 to 327 (NFKNETETDL…AKLRNMMSWL (146 aa)) is the KARI C-terminal knotted domain. D190, E194, E226, and E230 together coordinate Mg(2+). A substrate-binding site is contributed by S251.

The protein belongs to the ketol-acid reductoisomerase family. It depends on Mg(2+) as a cofactor.

It catalyses the reaction (2R)-2,3-dihydroxy-3-methylbutanoate + NADP(+) = (2S)-2-acetolactate + NADPH + H(+). The enzyme catalyses (2R,3R)-2,3-dihydroxy-3-methylpentanoate + NADP(+) = (S)-2-ethyl-2-hydroxy-3-oxobutanoate + NADPH + H(+). Its pathway is amino-acid biosynthesis; L-isoleucine biosynthesis; L-isoleucine from 2-oxobutanoate: step 2/4. It functions in the pathway amino-acid biosynthesis; L-valine biosynthesis; L-valine from pyruvate: step 2/4. Involved in the biosynthesis of branched-chain amino acids (BCAA). Catalyzes an alkyl-migration followed by a ketol-acid reduction of (S)-2-acetolactate (S2AL) to yield (R)-2,3-dihydroxy-isovalerate. In the isomerase reaction, S2AL is rearranged via a Mg-dependent methyl migration to produce 3-hydroxy-3-methyl-2-ketobutyrate (HMKB). In the reductase reaction, this 2-ketoacid undergoes a metal-dependent reduction by NADPH to yield (R)-2,3-dihydroxy-isovalerate. The sequence is that of Ketol-acid reductoisomerase (NADP(+)) from Chlorobium chlorochromatii (strain CaD3).